Reading from the N-terminus, the 419-residue chain is Metacaspase-1 (419 aa).

Residues Met1–Gln109 form a disordered region. 2 stretches are compositionally biased toward pro residues: residues Gln18–Gln37 and Gln45–Gln61. Over residues Ser83–Asn95 the composition is skewed to polar residues. Active-site residues include His210 and Cys266.

It belongs to the peptidase C14B family.

Functionally, involved in cell death (apoptosis). This is Metacaspase-1 (casA) from Botryotinia fuckeliana (strain B05.10) (Noble rot fungus).